Reading from the N-terminus, the 122-residue chain is Large ribosomal subunit protein uL18 (122 aa).

Belongs to the universal ribosomal protein uL18 family. Part of the 50S ribosomal subunit; part of the 5S rRNA/L5/L18/L25 subcomplex. Contacts the 5S and 23S rRNAs.

Functionally, this is one of the proteins that bind and probably mediate the attachment of the 5S RNA into the large ribosomal subunit, where it forms part of the central protuberance. The chain is Large ribosomal subunit protein uL18 from Fervidobacterium nodosum (strain ATCC 35602 / DSM 5306 / Rt17-B1).